Reading from the N-terminus, the 94-residue chain is MSSFPVLNVGFSNVVFVSKILTILLADSAGAKRLRTEAKSENRLIDATCGRKTRSVLVLESGHILLSAIRPESLSKRLETGDNHIGEGEEESED.

This sequence belongs to the RemA family.

The protein is Putative regulatory protein LEPBI_I0950 of Leptospira biflexa serovar Patoc (strain Patoc 1 / ATCC 23582 / Paris).